We begin with the raw amino-acid sequence, 520 residues long: Probable alginate O-acetylase AlgI (520 aa).

The next 10 helical transmembrane spans lie at 7–24 (VFLFLFLPVFLGLYYLSG), 39–61 (FYAWWRVDFLLLFAGVTVFNYWI), 78–100 (WLILGVVVDLCVLGYFKYANFGV), 115–137 (FVLTHILLPIGISFYTFESISYI), 150–172 (NLIDFAAFVAIFPHLIAGPVLRF), 239–261 (LYFDFSGYSDMAIGLGLMMGFRF), 311–333 (LFLTMLLGGLWHGANFTYIIWGA), 353–375 (VLNPLKWVITFLLVVIGWVIFRA), 402–424 (ANLTGLQVGTLVLAYLVLAFFGL), and 483–505 (WLSQLPVLATRLALLLLFAASVL). His-322 is a catalytic residue.

Belongs to the membrane-bound acyltransferase family.

It is found in the cell inner membrane. Its pathway is glycan biosynthesis; alginate biosynthesis. Functionally, together with AlgJ and AlgF, forms an inner membrane complex which probably interacts with the alginate polymerization-transport complex and adds acetyl groups at the O-2 and O-3 positions of mannuronate residues. Acetylation of alginate is important for the architecture of biofilms and increases resistance to opsonic killing in the host. In Pseudomonas aeruginosa (strain ATCC 15692 / DSM 22644 / CIP 104116 / JCM 14847 / LMG 12228 / 1C / PRS 101 / PAO1), this protein is Probable alginate O-acetylase AlgI (algI).